A 174-amino-acid chain; its full sequence is Interleukin-1 receptor antagonist protein (174 aa).

The first 23 residues, 1–23, serve as a signal peptide directing secretion; that stretch reads MDIYIHGYLICLLLFLFRSETAC. A disulfide bridge connects residues cysteine 89 and cysteine 139. Asparagine 107 carries an N-linked (GlcNAc...) asparagine glycan.

Belongs to the IL-1 family.

The protein resides in the secreted. Its function is as follows. Anti-inflammatory antagonist of interleukin-1 family of proinflammatory cytokines such as interleukin-1beta/IL1B and interleukin-1alpha/IL1A. Protects from immune dysregulation and uncontrolled systemic inflammation triggered by IL1 for a range of innate stimulatory agents such as pathogens. In Bos taurus (Bovine), this protein is Interleukin-1 receptor antagonist protein (IL1RN).